The following is a 254-amino-acid chain: Adenosine 5'-phosphosulfate reductase (254 aa).

Residues C131, C132, C212, and C215 each contribute to the [4Fe-4S] cluster site. C238 serves as the catalytic Nucleophile; cysteine thiosulfonate intermediate.

This sequence belongs to the PAPS reductase family. CysH subfamily. It depends on [4Fe-4S] cluster as a cofactor.

It localises to the cytoplasm. It catalyses the reaction [thioredoxin]-disulfide + sulfite + AMP + 2 H(+) = adenosine 5'-phosphosulfate + [thioredoxin]-dithiol. It functions in the pathway sulfur metabolism; hydrogen sulfide biosynthesis; sulfite from sulfate. Catalyzes the formation of sulfite from adenosine 5'-phosphosulfate (APS) using thioredoxin as an electron donor. The chain is Adenosine 5'-phosphosulfate reductase from Mesorhizobium japonicum (strain LMG 29417 / CECT 9101 / MAFF 303099) (Mesorhizobium loti (strain MAFF 303099)).